A 547-amino-acid chain; its full sequence is DEAD-box ATP-dependent RNA helicase 31 (547 aa).

Residues 1-34 (MFDFGLSEDDSELGEVDEDDGPSGFEDDLFDDEG) are compositionally biased toward acidic residues. The tract at residues 1-74 (MFDFGLSEDD…HTRESGGGDS (74 aa)) is disordered. The segment covering 53-70 (IKGEPIDQEGVVHTRESG) has biased composition (basic and acidic residues). The Q motif signature appears at 79–107 (TRFDECSLSPLTLKGVKAAGYERMTAVQE). The 184-residue stretch at 110-293 (LPIILKGKDV…HIAMKRDLEF (184 aa)) folds into the Helicase ATP-binding domain. 123 to 130 (AKTGTGKT) contributes to the ATP binding site. Positions 241 to 244 (DEAD) match the DEAD box motif. A Helicase C-terminal domain is found at 327–478 (LLTDHISENV…TKRKVEKALA (152 aa)).

Belongs to the DEAD box helicase family.

The enzyme catalyses ATP + H2O = ADP + phosphate + H(+). The polypeptide is DEAD-box ATP-dependent RNA helicase 31 (Oryza sativa subsp. japonica (Rice)).